The primary structure comprises 557 residues: 2-isopropylmalate synthase (557 aa).

The region spanning 31 to 304 (PTWCSVDLRD…DPGLNFASML (274 aa)) is the Pyruvate carboxyltransferase domain. Mg(2+) is bound by residues Asp40, His243, His245, and Asn279. The tract at residues 439–557 (IENPIKFLNF…NTMIKDSAAV (119 aa)) is regulatory domain.

The protein belongs to the alpha-IPM synthase/homocitrate synthase family. LeuA type 2 subfamily. In terms of assembly, homodimer. The cofactor is Mg(2+).

It localises to the cytoplasm. It carries out the reaction 3-methyl-2-oxobutanoate + acetyl-CoA + H2O = (2S)-2-isopropylmalate + CoA + H(+). The protein operates within amino-acid biosynthesis; L-leucine biosynthesis; L-leucine from 3-methyl-2-oxobutanoate: step 1/4. Its function is as follows. Catalyzes the condensation of the acetyl group of acetyl-CoA with 3-methyl-2-oxobutanoate (2-ketoisovalerate) to form 3-carboxy-3-hydroxy-4-methylpentanoate (2-isopropylmalate). The sequence is that of 2-isopropylmalate synthase from Desulfitobacterium hafniense (strain Y51).